A 226-amino-acid polypeptide reads, in one-letter code: Thymidylate kinase (226 aa).

ATP is bound at residue 20 to 27; sequence GGEGAGKS.

The protein belongs to the thymidylate kinase family.

The enzyme catalyses dTMP + ATP = dTDP + ADP. Functionally, phosphorylation of dTMP to form dTDP in both de novo and salvage pathways of dTTP synthesis. This Bradyrhizobium sp. (strain BTAi1 / ATCC BAA-1182) protein is Thymidylate kinase.